The sequence spans 344 residues: Phosphoribosylformylglycinamidine cyclo-ligase (344 aa).

Belongs to the AIR synthase family.

The protein resides in the cytoplasm. It carries out the reaction 2-formamido-N(1)-(5-O-phospho-beta-D-ribosyl)acetamidine + ATP = 5-amino-1-(5-phospho-beta-D-ribosyl)imidazole + ADP + phosphate + H(+). It participates in purine metabolism; IMP biosynthesis via de novo pathway; 5-amino-1-(5-phospho-D-ribosyl)imidazole from N(2)-formyl-N(1)-(5-phospho-D-ribosyl)glycinamide: step 2/2. The polypeptide is Phosphoribosylformylglycinamidine cyclo-ligase (Bifidobacterium animalis subsp. lactis (strain AD011)).